Here is a 98-residue protein sequence, read N- to C-terminus: Large ribosomal subunit protein bL27 (98 aa).

The interval 1 to 22 is disordered; the sequence is MAHKKGTGSTRNGRDSNAQRLG. Polar residues predominate over residues 7 to 19; the sequence is TGSTRNGRDSNAQ.

It belongs to the bacterial ribosomal protein bL27 family.

This is Large ribosomal subunit protein bL27 from Nostoc punctiforme (strain ATCC 29133 / PCC 73102).